A 354-amino-acid polypeptide reads, in one-letter code: Uroporphyrinogen decarboxylase (354 aa).

Substrate-binding positions include 27 to 31, Asp-77, Tyr-154, Thr-209, and His-327; that span reads RQAGR.

This sequence belongs to the uroporphyrinogen decarboxylase family. In terms of assembly, homodimer.

Its subcellular location is the cytoplasm. The catalysed reaction is uroporphyrinogen III + 4 H(+) = coproporphyrinogen III + 4 CO2. It participates in porphyrin-containing compound metabolism; protoporphyrin-IX biosynthesis; coproporphyrinogen-III from 5-aminolevulinate: step 4/4. Catalyzes the decarboxylation of four acetate groups of uroporphyrinogen-III to yield coproporphyrinogen-III. This chain is Uroporphyrinogen decarboxylase, found in Pseudomonas entomophila (strain L48).